A 215-amino-acid chain; its full sequence is dITP/XTP pyrophosphatase (215 aa).

Substrate is bound at residue 13–18; sequence THNTGK. D74 functions as the Proton acceptor in the catalytic mechanism. D74 contacts Mg(2+). Substrate-binding positions include S75, 163–166, K186, and 199–200; these read FGFD and HR.

The protein belongs to the HAM1 NTPase family. Homodimer. The cofactor is Mg(2+).

It carries out the reaction XTP + H2O = XMP + diphosphate + H(+). It catalyses the reaction dITP + H2O = dIMP + diphosphate + H(+). The catalysed reaction is ITP + H2O = IMP + diphosphate + H(+). Functionally, pyrophosphatase that catalyzes the hydrolysis of nucleoside triphosphates to their monophosphate derivatives, with a high preference for the non-canonical purine nucleotides XTP (xanthosine triphosphate), dITP (deoxyinosine triphosphate) and ITP. Seems to function as a house-cleaning enzyme that removes non-canonical purine nucleotides from the nucleotide pool, thus preventing their incorporation into DNA/RNA and avoiding chromosomal lesions. This chain is dITP/XTP pyrophosphatase, found in Bartonella quintana (strain Toulouse) (Rochalimaea quintana).